Consider the following 343-residue polypeptide: ABC transporter riboflavin-binding protein RfuA (343 aa).

Positions 1–19 (MNGAVCVLSALIAVFTCFS) are cleaved as a signal peptide. Cys-20 is lipidated: N-palmitoyl cysteine. A lipid anchor (S-diacylglycerol cysteine) is attached at Cys-20. Riboflavin is bound by residues 43-46 (SPVY), Asp-124, Gln-140, Tyr-176, Trp-208, and Asp-255.

The protein belongs to the BMP lipoprotein family. Monomer in solution. The complex is probably composed of two ATP-binding proteins (RfuB), two transmembrane proteins (RfuC and RfuD) and a solute-binding protein (RfuA).

It is found in the cell inner membrane. Probably part of the ABC transporter complex RfuABCD involved in riboflavin import. Binds riboflavin. This Treponema pallidum (strain Nichols) protein is ABC transporter riboflavin-binding protein RfuA.